The chain runs to 136 residues: Large ribosomal subunit protein uL16 (136 aa).

The protein belongs to the universal ribosomal protein uL16 family. In terms of assembly, part of the 50S ribosomal subunit.

Its function is as follows. Binds 23S rRNA and is also seen to make contacts with the A and possibly P site tRNAs. This Serratia proteamaculans (strain 568) protein is Large ribosomal subunit protein uL16.